A 118-amino-acid chain; its full sequence is MLMYKKIVGHKKNMLPATLNNIDDSQNVALNRKKSENKKLTLQEKIELSWQFLYDLTEIILNKFSKEDVVQVNKCGQILFENGVRYEHVVDLITPHQVRSHTQLVEQEQSKGKKALRM.

This is an uncharacterized protein from Rickettsia prowazekii (strain Madrid E).